A 178-amino-acid chain; its full sequence is ATP synthase subunit delta (178 aa).

The protein belongs to the ATPase delta chain family. As to quaternary structure, F-type ATPases have 2 components, F(1) - the catalytic core - and F(0) - the membrane proton channel. F(1) has five subunits: alpha(3), beta(3), gamma(1), delta(1), epsilon(1). F(0) has three main subunits: a(1), b(2) and c(10-14). The alpha and beta chains form an alternating ring which encloses part of the gamma chain. F(1) is attached to F(0) by a central stalk formed by the gamma and epsilon chains, while a peripheral stalk is formed by the delta and b chains.

It localises to the cell membrane. In terms of biological role, f(1)F(0) ATP synthase produces ATP from ADP in the presence of a proton or sodium gradient. F-type ATPases consist of two structural domains, F(1) containing the extramembraneous catalytic core and F(0) containing the membrane proton channel, linked together by a central stalk and a peripheral stalk. During catalysis, ATP synthesis in the catalytic domain of F(1) is coupled via a rotary mechanism of the central stalk subunits to proton translocation. Its function is as follows. This protein is part of the stalk that links CF(0) to CF(1). It either transmits conformational changes from CF(0) to CF(1) or is implicated in proton conduction. The polypeptide is ATP synthase subunit delta (Geobacillus stearothermophilus (Bacillus stearothermophilus)).